We begin with the raw amino-acid sequence, 110 residues long: DNA-directed RNA polymerase subunit omega (110 aa).

It belongs to the RNA polymerase subunit omega family. The RNAP catalytic core consists of 2 alpha, 1 beta, 1 beta' and 1 omega subunit. When a sigma factor is associated with the core the holoenzyme is formed, which can initiate transcription.

It catalyses the reaction RNA(n) + a ribonucleoside 5'-triphosphate = RNA(n+1) + diphosphate. Functionally, promotes RNA polymerase assembly. Latches the N- and C-terminal regions of the beta' subunit thereby facilitating its interaction with the beta and alpha subunits. The protein is DNA-directed RNA polymerase subunit omega of Nocardioides sp. (strain ATCC BAA-499 / JS614).